We begin with the raw amino-acid sequence, 455 residues long: Phosphoglucosamine mutase (455 aa).

Residue serine 102 is the Phosphoserine intermediate of the active site. 4 residues coordinate Mg(2+): serine 102, aspartate 241, aspartate 243, and aspartate 245. The residue at position 102 (serine 102) is a Phosphoserine.

Belongs to the phosphohexose mutase family. Mg(2+) is required as a cofactor. Activated by phosphorylation.

It carries out the reaction alpha-D-glucosamine 1-phosphate = D-glucosamine 6-phosphate. Functionally, catalyzes the conversion of glucosamine-6-phosphate to glucosamine-1-phosphate. The polypeptide is Phosphoglucosamine mutase (Legionella pneumophila (strain Paris)).